A 499-amino-acid chain; its full sequence is Glycerol kinase (499 aa).

Threonine 17 provides a ligand contact to ADP. The ATP site is built by threonine 17, threonine 18, and serine 19. Residue threonine 17 coordinates sn-glycerol 3-phosphate. Arginine 21 is a binding site for ADP. Arginine 87, glutamate 88, tyrosine 139, and aspartate 243 together coordinate sn-glycerol 3-phosphate. Glycerol-binding residues include arginine 87, glutamate 88, tyrosine 139, aspartate 243, and glutamine 244. Residues threonine 265 and glycine 308 each contribute to the ADP site. Positions 265, 308, 312, and 409 each coordinate ATP. Residues glycine 409 and asparagine 413 each contribute to the ADP site.

The protein belongs to the FGGY kinase family.

It carries out the reaction glycerol + ATP = sn-glycerol 3-phosphate + ADP + H(+). The protein operates within polyol metabolism; glycerol degradation via glycerol kinase pathway; sn-glycerol 3-phosphate from glycerol: step 1/1. With respect to regulation, inhibited by fructose 1,6-bisphosphate (FBP). In terms of biological role, key enzyme in the regulation of glycerol uptake and metabolism. Catalyzes the phosphorylation of glycerol to yield sn-glycerol 3-phosphate. The chain is Glycerol kinase from Pseudomonas putida (strain ATCC 700007 / DSM 6899 / JCM 31910 / BCRC 17059 / LMG 24140 / F1).